Consider the following 205-residue polypeptide: Large ribosomal subunit protein uL4 (205 aa).

A disordered region spans residues 56 to 78; it reads VSGTTAKPYRQKHTGRARQGSLR.

This sequence belongs to the universal ribosomal protein uL4 family. In terms of assembly, part of the 50S ribosomal subunit.

In terms of biological role, one of the primary rRNA binding proteins, this protein initially binds near the 5'-end of the 23S rRNA. It is important during the early stages of 50S assembly. It makes multiple contacts with different domains of the 23S rRNA in the assembled 50S subunit and ribosome. Functionally, forms part of the polypeptide exit tunnel. This is Large ribosomal subunit protein uL4 from Ehrlichia ruminantium (strain Gardel).